The following is a 628-amino-acid chain: DNA-directed RNA polymerase subunit beta' (628 aa).

Positions 70, 72, 85, and 88 each coordinate Zn(2+). Positions 472, 474, and 476 each coordinate Mg(2+).

The protein belongs to the RNA polymerase beta' chain family. RpoC1 subfamily. As to quaternary structure, in plastids the minimal PEP RNA polymerase catalytic core is composed of four subunits: alpha, beta, beta', and beta''. When a (nuclear-encoded) sigma factor is associated with the core the holoenzyme is formed, which can initiate transcription. Requires Mg(2+) as cofactor. It depends on Zn(2+) as a cofactor.

It is found in the plastid. The protein resides in the chloroplast. The catalysed reaction is RNA(n) + a ribonucleoside 5'-triphosphate = RNA(n+1) + diphosphate. In terms of biological role, DNA-dependent RNA polymerase catalyzes the transcription of DNA into RNA using the four ribonucleoside triphosphates as substrates. This chain is DNA-directed RNA polymerase subunit beta', found in Gracilaria tenuistipitata var. liui (Red alga).